Reading from the N-terminus, the 1156-residue chain is Nuclear pore-associated protein 1 (1156 aa).

8 disordered regions span residues 1 to 60, 155 to 204, 219 to 266, 481 to 515, 680 to 703, 732 to 786, 872 to 915, and 1026 to 1046; these read MGNL…RRPS, EGPR…FRCS, NSMS…PEPA, GGSYNSVVGAAPLTSDPPTPPSSTPSFKPPVTRES, TLVNSASTASSSKPPIETNAMHTT, NTQP…KTSL, STSF…SSFI, and APGPSSTSGELNIGQGQSGTP. Basic residues predominate over residues 50-59; the sequence is LFRRNARRRP. Residues 156 to 165 are compositionally biased toward basic and acidic residues; that stretch reads GPRRVKKDED. 2 stretches are compositionally biased toward polar residues: residues 179–197 and 219–231; these read PLSSGEASSTSRSQGTQGD and NSMSEKAQASPAS. 4 stretches are compositionally biased toward polar residues: residues 680–692, 732–750, 884–915, and 1028–1046; these read TLVNSASTASSSK, NTQPSGNTASVQGSTSLPA, TTTSSHPLNTGSISHSTLGATDGQQKSDSSFI, and GPSSTSGELNIGQGQSGTP.

Associates with the nuclear pore complex (NPC). In terms of tissue distribution, testis-specific in adults. In fetal brain expressed only from the paternal allele.

It is found in the nucleus. Its subcellular location is the nucleoplasm. The protein localises to the nucleus inner membrane. May be involved in spermatogenesis. The sequence is that of Nuclear pore-associated protein 1 (NPAP1) from Homo sapiens (Human).